We begin with the raw amino-acid sequence, 279 residues long: Thymidylate synthase (279 aa).

133-134 (RR) contributes to the dUMP binding site. The active-site Nucleophile is the Cys-154. DUMP-binding positions include 178–181 (RSND), Asn-189, and 219–221 (HIY). Asp-181 provides a ligand contact to (6R)-5,10-methylene-5,6,7,8-tetrahydrofolate. Ala-278 serves as a coordination point for (6R)-5,10-methylene-5,6,7,8-tetrahydrofolate.

It belongs to the thymidylate synthase family. Bacterial-type ThyA subfamily. As to quaternary structure, homodimer.

The protein localises to the cytoplasm. It carries out the reaction dUMP + (6R)-5,10-methylene-5,6,7,8-tetrahydrofolate = 7,8-dihydrofolate + dTMP. The protein operates within pyrimidine metabolism; dTTP biosynthesis. In terms of biological role, catalyzes the reductive methylation of 2'-deoxyuridine-5'-monophosphate (dUMP) to 2'-deoxythymidine-5'-monophosphate (dTMP) while utilizing 5,10-methylenetetrahydrofolate (mTHF) as the methyl donor and reductant in the reaction, yielding dihydrofolate (DHF) as a by-product. This enzymatic reaction provides an intracellular de novo source of dTMP, an essential precursor for DNA biosynthesis. In Streptococcus mutans serotype c (strain ATCC 700610 / UA159), this protein is Thymidylate synthase.